Consider the following 473-residue polypeptide: Glutamate--tRNA ligase (473 aa).

A 'HIGH' region motif is present at residues 9–19 (PSPTGYLHVGG). Zn(2+)-binding residues include C98, C100, C125, and D127. The 'KMSKS' region motif lies at 237–241 (KLSKR). K240 serves as a coordination point for ATP.

This sequence belongs to the class-I aminoacyl-tRNA synthetase family. Glutamate--tRNA ligase type 1 subfamily. Monomer. Zn(2+) is required as a cofactor.

It localises to the cytoplasm. The catalysed reaction is tRNA(Glu) + L-glutamate + ATP = L-glutamyl-tRNA(Glu) + AMP + diphosphate. Catalyzes the attachment of glutamate to tRNA(Glu) in a two-step reaction: glutamate is first activated by ATP to form Glu-AMP and then transferred to the acceptor end of tRNA(Glu). In Sodalis glossinidius (strain morsitans), this protein is Glutamate--tRNA ligase.